A 484-amino-acid chain; its full sequence is UDP-N-acetylmuramoyl-L-alanyl-D-glutamate--L-lysine ligase (484 aa).

S43 serves as a coordination point for UDP-N-acetyl-alpha-D-muramoyl-L-alanyl-D-glutamate. 119 to 125 contacts ATP; sequence GTKGKTT. Residues 161–162, S188, and R196 contribute to the UDP-N-acetyl-alpha-D-muramoyl-L-alanyl-D-glutamate site; that span reads TT. The residue at position 230 (K230) is an N6-carboxylysine. Residues 405 to 408 carry the L-lysine recognition motif motif; it reads DDPN.

It belongs to the MurCDEF family. MurE subfamily. In terms of processing, carboxylation is probably crucial for Mg(2+) binding and, consequently, for the gamma-phosphate positioning of ATP.

The protein resides in the cytoplasm. The catalysed reaction is UDP-N-acetyl-alpha-D-muramoyl-L-alanyl-D-glutamate + L-lysine + ATP = UDP-N-acetyl-alpha-D-muramoyl-L-alanyl-gamma-D-glutamyl-L-lysine + ADP + phosphate + H(+). It functions in the pathway cell wall biogenesis; peptidoglycan biosynthesis. Its function is as follows. Catalyzes the addition of L-lysine to the nucleotide precursor UDP-N-acetylmuramoyl-L-alanyl-D-glutamate (UMAG) in the biosynthesis of bacterial cell-wall peptidoglycan. The protein is UDP-N-acetylmuramoyl-L-alanyl-D-glutamate--L-lysine ligase of Streptococcus agalactiae serotype V (strain ATCC BAA-611 / 2603 V/R).